The sequence spans 789 residues: Protein translocase subunit SecA (789 aa).

ATP-binding positions include glutamine 85, 103 to 107 (GEGKT), and aspartate 492.

It belongs to the SecA family. As to quaternary structure, monomer and homodimer. Part of the essential Sec protein translocation apparatus which comprises SecA, SecYEG and auxiliary proteins SecDF. Other proteins may also be involved.

The protein resides in the cell membrane. It localises to the cytoplasm. It catalyses the reaction ATP + H2O + cellular proteinSide 1 = ADP + phosphate + cellular proteinSide 2.. Its function is as follows. Part of the Sec protein translocase complex. Interacts with the SecYEG preprotein conducting channel. Has a central role in coupling the hydrolysis of ATP to the transfer of proteins into and across the cell membrane, serving as an ATP-driven molecular motor driving the stepwise translocation of polypeptide chains across the membrane. This chain is Protein translocase subunit SecA, found in Limosilactobacillus fermentum (strain NBRC 3956 / LMG 18251) (Lactobacillus fermentum).